Here is a 589-residue protein sequence, read N- to C-terminus: Probable 9-cis-epoxycarotenoid dioxygenase NCED5, chloroplastic (589 aa).

Residues 1-45 constitute a chloroplast transit peptide; sequence MACSYILTPNPTKLNLSFAPSDLDAPSPSSSVSFTNTKPRRRKLS. Over residues 21–34 the composition is skewed to low complexity; sequence SDLDAPSPSSSVSF. A disordered region spans residues 21–51; sequence SDLDAPSPSSSVSFTNTKPRRRKLSANSVSD. Fe cation contacts are provided by His287, His336, His401, and His576.

This sequence belongs to the carotenoid oxygenase family. Interacts in vitro with VAR3. Fe(2+) is required as a cofactor. As to expression, detected only in seeds.

The protein resides in the plastid. Its subcellular location is the chloroplast thylakoid membrane. The enzyme catalyses a 9-cis-epoxycarotenoid + O2 = a 12'-apo-carotenal + 2-cis,4-trans-xanthoxin. The catalysed reaction is 9-cis-violaxanthin + O2 = (3S,5R,6S)-5,6-epoxy-3-hydroxy-5,6-dihydro-12'-apo-beta-caroten-12'-al + 2-cis,4-trans-xanthoxin. It catalyses the reaction 9'-cis-neoxanthin + O2 = (3S,5R,6R)-3,5-dihydroxy-6,7-didehydro-5,6-dihydro-12'-apo-beta-caroten-12'-al + 2-cis,4-trans-xanthoxin. Functionally, has a 11,12(11',12') 9-cis epoxycarotenoid cleavage activity. Catalyzes the first step of abscisic-acid biosynthesis from carotenoids. The chain is Probable 9-cis-epoxycarotenoid dioxygenase NCED5, chloroplastic (NCED5) from Arabidopsis thaliana (Mouse-ear cress).